The chain runs to 199 residues: dITP/XTP pyrophosphatase (199 aa).

8-13 contributes to the substrate binding site; that stretch reads THNRNK. Catalysis depends on Asp-68, which acts as the Proton acceptor. A Mg(2+)-binding site is contributed by Asp-68. Residues Ser-69, 151 to 154, Lys-174, and 179 to 180 contribute to the substrate site; these read HGYD and HR.

Belongs to the HAM1 NTPase family. Homodimer. It depends on Mg(2+) as a cofactor.

It catalyses the reaction XTP + H2O = XMP + diphosphate + H(+). The catalysed reaction is dITP + H2O = dIMP + diphosphate + H(+). The enzyme catalyses ITP + H2O = IMP + diphosphate + H(+). Pyrophosphatase that catalyzes the hydrolysis of nucleoside triphosphates to their monophosphate derivatives, with a high preference for the non-canonical purine nucleotides XTP (xanthosine triphosphate), dITP (deoxyinosine triphosphate) and ITP. Seems to function as a house-cleaning enzyme that removes non-canonical purine nucleotides from the nucleotide pool, thus preventing their incorporation into DNA/RNA and avoiding chromosomal lesions. In Leifsonia xyli subsp. xyli (strain CTCB07), this protein is dITP/XTP pyrophosphatase.